We begin with the raw amino-acid sequence, 207 residues long: Thiamine-phosphate synthase (207 aa).

Residues 35-39 and N67 contribute to the 4-amino-2-methyl-5-(diphosphooxymethyl)pyrimidine site; that span reads QYRDK. Residues D68 and D86 each coordinate Mg(2+). T105 lines the 4-amino-2-methyl-5-(diphosphooxymethyl)pyrimidine pocket. 132 to 134 provides a ligand contact to 2-[(2R,5Z)-2-carboxy-4-methylthiazol-5(2H)-ylidene]ethyl phosphate; that stretch reads SVT. K135 provides a ligand contact to 4-amino-2-methyl-5-(diphosphooxymethyl)pyrimidine. G162 contributes to the 2-[(2R,5Z)-2-carboxy-4-methylthiazol-5(2H)-ylidene]ethyl phosphate binding site.

It belongs to the thiamine-phosphate synthase family. Requires Mg(2+) as cofactor.

It catalyses the reaction 2-[(2R,5Z)-2-carboxy-4-methylthiazol-5(2H)-ylidene]ethyl phosphate + 4-amino-2-methyl-5-(diphosphooxymethyl)pyrimidine + 2 H(+) = thiamine phosphate + CO2 + diphosphate. The enzyme catalyses 2-(2-carboxy-4-methylthiazol-5-yl)ethyl phosphate + 4-amino-2-methyl-5-(diphosphooxymethyl)pyrimidine + 2 H(+) = thiamine phosphate + CO2 + diphosphate. The catalysed reaction is 4-methyl-5-(2-phosphooxyethyl)-thiazole + 4-amino-2-methyl-5-(diphosphooxymethyl)pyrimidine + H(+) = thiamine phosphate + diphosphate. The protein operates within cofactor biosynthesis; thiamine diphosphate biosynthesis; thiamine phosphate from 4-amino-2-methyl-5-diphosphomethylpyrimidine and 4-methyl-5-(2-phosphoethyl)-thiazole: step 1/1. Its function is as follows. Condenses 4-methyl-5-(beta-hydroxyethyl)thiazole monophosphate (THZ-P) and 2-methyl-4-amino-5-hydroxymethyl pyrimidine pyrophosphate (HMP-PP) to form thiamine monophosphate (TMP). The chain is Thiamine-phosphate synthase from Pseudomonas putida (strain ATCC 47054 / DSM 6125 / CFBP 8728 / NCIMB 11950 / KT2440).